A 2201-amino-acid polypeptide reads, in one-letter code: Tenascin (2201 aa).

Residues 1–22 (MGAMTQLLAGVFLAFLALATEG) form the signal peptide. Asparagine 38 carries N-linked (GlcNAc...) asparagine glycosylation. 2 positions are modified to phosphoserine: serine 65 and serine 70. Residue serine 72 is modified to Phosphoserine; by FAM20C. Serine 72 carries an O-linked (Xyl...) (chondroitin sulfate) serine glycan. Residues 118-145 (DVKELLSRLEELENLVSSLREQCTAGAG) adopt a coiled-coil conformation. N-linked (GlcNAc...) asparagine glycosylation is found at asparagine 166 and asparagine 184. The region spanning 174-186 (CVCEPGWKGPNCS) is the EGF-like 1; incomplete domain. EGF-like domains are found at residues 186 to 217 (SEPECPGNCHLRGRCIDGQCICDDGFTGEDCS), 217 to 248 (SQLACPSDCNDQGKCVNGVCICFEGYAGADCS), 248 to 280 (SREICPVPCSEEHGTCVDGLCVCHDGFAGDDCN), 280 to 311 (NKPLCLNNCYNRGRCVENECVCDEGFTGEDCS), 311 to 342 (SELICPNDCFDRGRCINGTCYCEEGFTGEDCG), 342 to 373 (GKPTCPHACHTQGRCEEGQCVCDEGFAGVDCS), 373 to 404 (SEKRCPADCHNRGRCVDGRCECDDGFTGADCG), 404 to 435 (GELKCPNGCSGHGRCVNGQCVCDEGYTGEDCS), 435 to 466 (SQLRCPNDCHSRGRCVEGKCVCEQGFKGYDCS), 466 to 497 (SDMSCPNDCHQHGRCVNGMCVCDDGYTGEDCR), 497 to 528 (RDRQCPRDCSNRGLCVDGQCVCEDGFTGPDCA), 528 to 559 (AELSCPNDCHGQGRCVNGQCVCHEGFMGKDCK), 559 to 590 (KEQRCPSDCHGQGRCVDGQCICHEGFTGLDCG), and 590 to 621 (GQHSCPSDCNNLGQCVSGRCICNEGYSGEDCS). Intrachain disulfides connect cysteine 190-cysteine 200, cysteine 194-cysteine 205, cysteine 207-cysteine 216, cysteine 221-cysteine 231, cysteine 225-cysteine 236, cysteine 238-cysteine 247, cysteine 252-cysteine 263, cysteine 256-cysteine 268, cysteine 270-cysteine 279, cysteine 284-cysteine 294, cysteine 288-cysteine 299, cysteine 301-cysteine 310, cysteine 315-cysteine 325, cysteine 319-cysteine 330, cysteine 332-cysteine 341, cysteine 346-cysteine 356, cysteine 350-cysteine 361, cysteine 363-cysteine 372, cysteine 377-cysteine 387, cysteine 381-cysteine 392, cysteine 394-cysteine 403, cysteine 408-cysteine 418, cysteine 412-cysteine 423, cysteine 425-cysteine 434, cysteine 439-cysteine 449, cysteine 443-cysteine 454, cysteine 456-cysteine 465, cysteine 470-cysteine 480, cysteine 474-cysteine 485, cysteine 487-cysteine 496, cysteine 501-cysteine 511, cysteine 505-cysteine 516, cysteine 518-cysteine 527, cysteine 532-cysteine 542, cysteine 536-cysteine 547, cysteine 549-cysteine 558, cysteine 563-cysteine 573, cysteine 567-cysteine 578, cysteine 580-cysteine 589, cysteine 594-cysteine 604, cysteine 598-cysteine 609, and cysteine 611-cysteine 620. Asparagine 327 carries N-linked (GlcNAc...) asparagine glycosylation. Fibronectin type-III domains are found at residues 625–715 (PPKD…LPAP), 716–804 (EGLK…TRLD), 805–894 (APSQ…TGLD), 895–990 (APRN…TPKD), 991–1075 (LQVS…EQAP), 1076–1165 (ELEN…TGET), 1167–1256 (NLGE…TEEV), 1258–1350 (DMGN…LPQL), 1351–1439 (GDLA…AKEP), 1440–1531 (EIGN…ALPL), 1533–1621 (ENLT…EAEP), 1622–1711 (EVDN…TAMG), 1712–1801 (SPKE…ALDG), 1802–1888 (PSGL…TDLD), and 1889–1977 (SPRD…IGLL). The N-linked (GlcNAc...) asparagine glycan is linked to asparagine 788. Residue threonine 905 is modified to Phosphothreonine. Asparagine 1018, asparagine 1034, asparagine 1079, asparagine 1093, asparagine 1119, asparagine 1184, asparagine 1210, asparagine 1261, asparagine 1275, asparagine 1301, asparagine 1366, asparagine 1392, asparagine 1445, asparagine 1455, asparagine 1485, and asparagine 1534 each carry an N-linked (GlcNAc...) asparagine glycan. The N-linked (GlcNAc...) asparagine glycan is linked to asparagine 1809. Residues 1975 to 2190 (GLLYPFPKDC…FAEMKLRPSN (216 aa)) form the Fibrinogen C-terminal domain. The N-linked (GlcNAc...) asparagine glycan is linked to asparagine 2162.

Belongs to the tenascin family. Homohexamer; disulfide-linked. A homotrimer may be formed in the triple coiled-coil region and may be stabilized by disulfide rings at both ends. Two of such half-hexabrachions may be disulfide linked within the central globule. Interacts with CSPG4. Interacts (via the 3rd fibronectin type-III domain) with integrin ITGA9:ITGB1. In terms of tissue distribution, detected in fibroblasts (at protein level).

The protein resides in the secreted. It is found in the extracellular space. Its subcellular location is the extracellular matrix. Its function is as follows. Extracellular matrix protein implicated in guidance of migrating neurons as well as axons during development, synaptic plasticity as well as neuronal regeneration. Promotes neurite outgrowth from cortical neurons grown on a monolayer of astrocytes. Ligand for integrins alpha-8/beta-1, alpha-9/beta-1, alpha-V/beta-3 and alpha-V/beta-6. In tumors, stimulates angiogenesis by elongation, migration and sprouting of endothelial cells. The sequence is that of Tenascin (TNC) from Homo sapiens (Human).